The primary structure comprises 167 residues: NADH-quinone oxidoreductase subunit B (167 aa).

The [4Fe-4S] cluster site is built by Cys-48, Cys-49, Cys-113, and Cys-143.

This sequence belongs to the complex I 20 kDa subunit family. As to quaternary structure, NDH-1 is composed of 14 different subunits. Subunits NuoB, C, D, E, F, and G constitute the peripheral sector of the complex. [4Fe-4S] cluster is required as a cofactor.

Its subcellular location is the cell membrane. The catalysed reaction is a quinone + NADH + 5 H(+)(in) = a quinol + NAD(+) + 4 H(+)(out). Functionally, NDH-1 shuttles electrons from NADH, via FMN and iron-sulfur (Fe-S) centers, to quinones in the respiratory chain. Couples the redox reaction to proton translocation (for every two electrons transferred, four hydrogen ions are translocated across the cytoplasmic membrane), and thus conserves the redox energy in a proton gradient. The sequence is that of NADH-quinone oxidoreductase subunit B from Wolbachia pipientis subsp. Culex pipiens (strain wPip).